We begin with the raw amino-acid sequence, 312 residues long: MGKSKVLIIGGTGYLGRRLVKASLAQGHETYILHRPEIGVDIDKVEMLISFKMQGAHLVSGSFKDFNSLVEAVKLVDVVISAISGVHIRSHQILLQLKLVEAIKEAGNVKRFLPSEFGMDPAKFMDTAMEPGKVTLDEKMVVRKAIEKAGIPFTYVSANCFAGYFLGGLCQFGKILPSRDFVIIHGDGNKKAIYNNEDDIATYAIKTINDPRTLNKTIYISPPKNILSQREVVQTWEKLIGKELQKITLSKEDFLASVKELEYAQQVGLSHYHDVNYQGCLTSFEIGDEEEASKLYPEVKYTSVEEYLKRYV.

Residues 10–16 (GGTGYLG), Arg35, and Lys44 each bind NADP(+). Catalysis depends on Lys139, which acts as the Proton acceptor. Arg143 contributes to the NADP(+) binding site. A substrate-binding site is contributed by His271.

Belongs to the NmrA-type oxidoreductase family. Isoflavone reductase subfamily. Dimer. Expressed in young stems, young roots and petioles. In stems, expressed in radial parenchyma cells and in the cambial cells of developing secondary xylem.

It carries out the reaction (+)-lariciresinol + NADP(+) = (+)-pinoresinol + NADPH + H(+). The enzyme catalyses (-)-secoisolariciresinol + NADP(+) = (+)-lariciresinol + NADPH + H(+). Functionally, reductase involved in lignan biosynthesis. Catalyzes the enantioselective sequential conversion of (+)-pinoresinol into (+)-lariciresinol and of (+)-lariciresinol into (-)-secoisolariciresinol. Abstracts the 4R-hydride from the NADPH cofactor during catalysis. The sequence is that of Bifunctional pinoresinol-lariciresinol reductase (PLR_Fi1) from Forsythia intermedia (Border forsythia).